Here is a 216-residue protein sequence, read N- to C-terminus: EFFIHYLRKDGPDKWEKSEKVNSTQSFYTLHGLQPGSQYRLKIDFNNTKWEQEIQTAGARVMEVKSGFVTESWFIGLISALVLLLLVLLILCFIKRSKGGKYSVKEKEEGQIDSEARPMNNEAFGEYRSLESDNEEKRTASQPSLCEDSKLCTDDGLDDYANSNSVQTEVIMDESLASQSSGVRDVPDAETQESSPLNPATAISHHGLPNSAALLD.

In terms of domain architecture, Fibronectin type-III spans 1–64 (EFFIHYLRKD…QTAGARVMEV (64 aa)). Residues 1–73 (EFFIHYLRKD…VKSGFVTESW (73 aa)) are Extracellular-facing. N-linked (GlcNAc...) asparagine glycosylation is found at Asn-22 and Asn-46. The helical transmembrane segment at 74–94 (FIGLISALVLLLLVLLILCFI) threads the bilayer. Topologically, residues 95–216 (KRSKGGKYSV…GLPNSAALLD (122 aa)) are cytoplasmic. Disordered regions lie at residues 127 to 149 (YRSL…CEDS) and 173 to 216 (DESL…ALLD). Residues 128-139 (RSLESDNEEKRT) are compositionally biased toward basic and acidic residues.

The protein belongs to the immunoglobulin superfamily. L1/neurofascin/NgCAM family. Expressed in many postmitotic neurons in 16-36 hours embryos. Little or no expression in the olfactory placode, the anterior lateral line/acoustic ganglia complex, the posterior lateral line ganglion, late-developing hindbrain neurons and some Rohon-Beard cells in the spinal cord.

It localises to the cell membrane. The protein localises to the cell projection. It is found in the growth cone. Functionally, cell adhesion molecule with an important role in the development of the nervous system. Involved in neuron-neuron adhesion, neurite fasciculation, outgrowth of neurites, etc. Binds to axonin on neurons. The chain is Neural cell adhesion molecule L1.2 (nadl1.2) from Danio rerio (Zebrafish).